The primary structure comprises 551 residues: GMP synthase [glutamine-hydrolyzing] (551 aa).

The Glutamine amidotransferase type-1 domain maps to 40–233 (KILIVDFGSQ…VRKIAGLTGD (194 aa)). The Nucleophile role is filled by cysteine 117. Residues histidine 207 and glutamate 209 contribute to the active site. A GMPS ATP-PPase domain is found at 234-426 (WTMRAFREEE…LGLPEIFVGR (193 aa)). 261–267 (SGGVDSA) contributes to the ATP binding site.

In terms of assembly, homodimer.

The enzyme catalyses XMP + L-glutamine + ATP + H2O = GMP + L-glutamate + AMP + diphosphate + 2 H(+). The protein operates within purine metabolism; GMP biosynthesis; GMP from XMP (L-Gln route): step 1/1. Its function is as follows. Catalyzes the synthesis of GMP from XMP. This Bradyrhizobium diazoefficiens (strain JCM 10833 / BCRC 13528 / IAM 13628 / NBRC 14792 / USDA 110) protein is GMP synthase [glutamine-hydrolyzing].